A 78-amino-acid polypeptide reads, in one-letter code: Large ribosomal subunit protein bL28 (78 aa).

The segment at 1–20 (MSRVCQVTGKRPVTGNNRSH) is disordered.

Belongs to the bacterial ribosomal protein bL28 family.

In Vibrio parahaemolyticus serotype O3:K6 (strain RIMD 2210633), this protein is Large ribosomal subunit protein bL28.